A 281-amino-acid polypeptide reads, in one-letter code: NADPH-dependent 7-cyano-7-deazaguanine reductase (281 aa).

Residue 88 to 90 (IES) participates in substrate binding. 90–91 (SK) is a binding site for NADPH. Cys189 (thioimide intermediate) is an active-site residue. Asp196 serves as the catalytic Proton donor. 228–229 (HE) contacts substrate. 257–258 (RG) contacts NADPH.

This sequence belongs to the GTP cyclohydrolase I family. QueF type 2 subfamily. Homodimer.

Its subcellular location is the cytoplasm. It carries out the reaction 7-aminomethyl-7-carbaguanine + 2 NADP(+) = 7-cyano-7-deazaguanine + 2 NADPH + 3 H(+). The protein operates within tRNA modification; tRNA-queuosine biosynthesis. Its function is as follows. Catalyzes the NADPH-dependent reduction of 7-cyano-7-deazaguanine (preQ0) to 7-aminomethyl-7-deazaguanine (preQ1). The sequence is that of NADPH-dependent 7-cyano-7-deazaguanine reductase from Sodalis glossinidius (strain morsitans).